Here is a 489-residue protein sequence, read N- to C-terminus: Phosphoenolpyruvate carboxykinase (ATP) (489 aa).

Substrate-binding residues include Arg53 and Tyr159. ATP is bound by residues His185, 208-216 (GLSGTGKTT), Asp258, Arg300, 409-410 (KI), and Ser415. Substrate is bound at residue Arg300.

It belongs to the phosphoenolpyruvate carboxykinase (ATP) family.

Its subcellular location is the cytoplasm. It carries out the reaction oxaloacetate + ATP = phosphoenolpyruvate + ADP + CO2. The protein operates within carbohydrate biosynthesis; gluconeogenesis. Functionally, involved in the gluconeogenesis. Catalyzes the conversion of oxaloacetate (OAA) to phosphoenolpyruvate (PEP) through direct phosphoryl transfer between the nucleoside triphosphate and OAA. In Aeropyrum pernix (strain ATCC 700893 / DSM 11879 / JCM 9820 / NBRC 100138 / K1), this protein is Phosphoenolpyruvate carboxykinase (ATP).